Consider the following 124-residue polypeptide: uncharacterized protein (124 aa).

This is an uncharacterized protein from Lactobacillus acidophilus.